The following is a 194-amino-acid chain: Inner membrane-spanning protein YciB (194 aa).

5 consecutive transmembrane segments (helical) span residues 3-23 (LFIEYFPLLIFFIINSIAGIY), 47-67 (IPAKQWIIFGLIVVFGGLTIY), 76-96 (WKVTIINAFFAAALLVSNTFF), 119-139 (LNLAWALFFLFCSGLNYYIAF), and 149-169 (FKVFGLTGLMFLFSITSILFL).

This sequence belongs to the YciB family.

Its subcellular location is the cell inner membrane. In terms of biological role, plays a role in cell envelope biogenesis, maintenance of cell envelope integrity and membrane homeostasis. This Colwellia psychrerythraea (strain 34H / ATCC BAA-681) (Vibrio psychroerythus) protein is Inner membrane-spanning protein YciB.